Reading from the N-terminus, the 204-residue chain is Urease accessory protein UreG (204 aa).

GTP is bound at residue Gly11–Thr18.

This sequence belongs to the SIMIBI class G3E GTPase family. UreG subfamily. In terms of assembly, homodimer. UreD, UreF and UreG form a complex that acts as a GTP-hydrolysis-dependent molecular chaperone, activating the urease apoprotein by helping to assemble the nickel containing metallocenter of UreC. The UreE protein probably delivers the nickel.

It is found in the cytoplasm. In terms of biological role, facilitates the functional incorporation of the urease nickel metallocenter. This process requires GTP hydrolysis, probably effectuated by UreG. This chain is Urease accessory protein UreG, found in Staphylococcus epidermidis (strain ATCC 12228 / FDA PCI 1200).